We begin with the raw amino-acid sequence, 308 residues long: Putative glutamine amidotransferase Rv2859c (308 aa).

Positions 1 to 62 are disordered; sequence MDLSASRSDG…ASPRLRSPLG (62 aa). 3 stretches are compositionally biased toward low complexity: residues 13–24, 31–42, and 49–61; these read PLRPASPRLRSP and PLRP…RSPL. One can recognise a Glutamine amidotransferase type-1 domain in the interval 78–301; the sequence is RTGVWDIPAG…VDAASGYAGR (224 aa). Residue cysteine 177 is the Nucleophile of the active site. Residues histidine 277 and glutamate 279 contribute to the active site. Residue lysine 289 forms an Isoglutamyl lysine isopeptide (Lys-Gln) (interchain with Q-Cter in protein Pup) linkage.

In Mycobacterium tuberculosis (strain ATCC 25618 / H37Rv), this protein is Putative glutamine amidotransferase Rv2859c.